Reading from the N-terminus, the 177-residue chain is NADH-quinone oxidoreductase subunit B (177 aa).

Cysteine 53, cysteine 54, cysteine 118, and cysteine 148 together coordinate [4Fe-4S] cluster.

Belongs to the complex I 20 kDa subunit family. NDH-1 is composed of 14 different subunits. Subunits NuoB, C, D, E, F, and G constitute the peripheral sector of the complex. [4Fe-4S] cluster is required as a cofactor.

The protein localises to the cell membrane. It catalyses the reaction a quinone + NADH + 5 H(+)(in) = a quinol + NAD(+) + 4 H(+)(out). In terms of biological role, NDH-1 shuttles electrons from NADH, via FMN and iron-sulfur (Fe-S) centers, to quinones in the respiratory chain. The immediate electron acceptor for the enzyme in this species is believed to be a menaquinone. Couples the redox reaction to proton translocation (for every two electrons transferred, four hydrogen ions are translocated across the cytoplasmic membrane), and thus conserves the redox energy in a proton gradient. The sequence is that of NADH-quinone oxidoreductase subunit B from Anoxybacillus flavithermus (strain DSM 21510 / WK1).